The sequence spans 89 residues: Small ribosomal subunit protein uS15 (89 aa).

Positions 1–10 (MSLDTTEKQE) are enriched in basic and acidic residues. Positions 1 to 23 (MSLDTTEKQELINAHQTHATDTG) are disordered. Positions 14–23 (AHQTHATDTG) are enriched in polar residues.

It belongs to the universal ribosomal protein uS15 family. As to quaternary structure, part of the 30S ribosomal subunit. Forms a bridge to the 50S subunit in the 70S ribosome, contacting the 23S rRNA.

Its function is as follows. One of the primary rRNA binding proteins, it binds directly to 16S rRNA where it helps nucleate assembly of the platform of the 30S subunit by binding and bridging several RNA helices of the 16S rRNA. Forms an intersubunit bridge (bridge B4) with the 23S rRNA of the 50S subunit in the ribosome. This chain is Small ribosomal subunit protein uS15, found in Synechococcus sp. (strain WH7803).